Here is a 372-residue protein sequence, read N- to C-terminus: MLDIFRGLKNLVKVSHVKTDSIVFRLHYSITVMILMSFSLIITTRQYVGNPIDCVHTKDIPEDVLNTYCWIQSTYTLKSLFLKKQGVSVPYPGIGNSDGDPADKKHYKYYQWVCFCLFFQAILFYTPRWLWKSWEGGKIHALIMDLDIGICSEAEKKQKKKLLLDYLWENLRYHNWWAYRYYVCELLALINVIGQMFLMNRFFDGEFITFGLKVIDYMETDQEDRMDPMIYIFPRMTKCTFFKYGSSGEVEKHDAICILPLNVVNEKIYIFLWFWFILLTFLTLLTLIYRVVIIFSPRMRVYLFRMRFRLVRRDAIEIIVRRSKMGDWFLLYLLGENIDTVIFRDVVQDLANRLGHNQHHRVPGLKGEIQDA.

The Cytoplasmic portion of the chain corresponds to 1 to 21 (MLDIFRGLKNLVKVSHVKTDS). A helical membrane pass occupies residues 22-42 (IVFRLHYSITVMILMSFSLII). At 43-110 (TTRQYVGNPI…PADKKHYKYY (68 aa)) the chain is on the extracellular side. Residues 111-131 (QWVCFCLFFQAILFYTPRWLW) form a helical membrane-spanning segment. Over 132–182 (KSWEGGKIHALIMDLDIGICSEAEKKQKKKLLLDYLWENLRYHNWWAYRYY) the chain is Cytoplasmic. Residues 183-203 (VCELLALINVIGQMFLMNRFF) form a helical membrane-spanning segment. The Extracellular portion of the chain corresponds to 204–267 (DGEFITFGLK…ILPLNVVNEK (64 aa)). A helical transmembrane segment spans residues 268-288 (IYIFLWFWFILLTFLTLLTLI). At 289–372 (YRVVIIFSPR…PGLKGEIQDA (84 aa)) the chain is on the cytoplasmic side.

Belongs to the pannexin family. Monomer (isoform Lethal). In terms of tissue distribution, isoform Neural is expressed in synapses of giant fibers (GF), in a large thoracic cell in location of postsynaptic target and optic lobe lamina and medulla. Isoform Lethal is expressed in embryonic mesodermal derivatives. During metamorphosis, both isoforms are dynamically expressed in pupal nervous system.

The protein localises to the cell membrane. It is found in the cell junction. It localises to the gap junction. Functionally, structural component of the gap junctions at electrical synapses in distal and mid-depth levels in the lamina. Isoform Lethal forms voltage sensitive intercellular channels through homotypic interactions. This Drosophila melanogaster (Fruit fly) protein is Innexin shaking-B (shakB).